The chain runs to 242 residues: Glucosamine-6-phosphate deaminase (242 aa).

D67 functions as the Proton acceptor; for enolization step in the catalytic mechanism. The active-site For ring-opening step is the N137. The active-site Proton acceptor; for ring-opening step is H139. E144 acts as the For ring-opening step in catalysis.

Belongs to the glucosamine/galactosamine-6-phosphate isomerase family. NagB subfamily.

It catalyses the reaction alpha-D-glucosamine 6-phosphate + H2O = beta-D-fructose 6-phosphate + NH4(+). The protein operates within amino-sugar metabolism; N-acetylneuraminate degradation; D-fructose 6-phosphate from N-acetylneuraminate: step 5/5. In terms of biological role, catalyzes the reversible isomerization-deamination of glucosamine 6-phosphate (GlcN6P) to form fructose 6-phosphate (Fru6P) and ammonium ion. In Staphylococcus saprophyticus subsp. saprophyticus (strain ATCC 15305 / DSM 20229 / NCIMB 8711 / NCTC 7292 / S-41), this protein is Glucosamine-6-phosphate deaminase.